Here is a 574-residue protein sequence, read N- to C-terminus: Polyamine aminopropyltransferase (574 aa).

7 helical membrane passes run valine 22–leucine 42, alanine 55–alanine 75, leucine 90–glycine 110, leucine 144–alanine 164, isoleucine 188–leucine 208, alanine 209–tryptophan 229, and leucine 237–proline 257. Residues isoleucine 254–histidine 510 form a spermidine synthase region. The PABS domain maps to proline 257 to glycine 505. S-methyl-5'-thioadenosine is bound at residue glutamine 281. The spermidine site is built by histidine 317 and aspartate 341. S-methyl-5'-thioadenosine contacts are provided by residues aspartate 360 and aspartate 403–alanine 404. The Proton acceptor role is filled by aspartate 424.

It belongs to the spermidine/spermine synthase family. In terms of assembly, homodimer or homotetramer.

The protein localises to the cell membrane. The catalysed reaction is S-adenosyl 3-(methylsulfanyl)propylamine + putrescine = S-methyl-5'-thioadenosine + spermidine + H(+). It participates in amine and polyamine biosynthesis; spermidine biosynthesis; spermidine from putrescine: step 1/1. Functionally, catalyzes the irreversible transfer of a propylamine group from the amino donor S-adenosylmethioninamine (decarboxy-AdoMet) to putrescine (1,4-diaminobutane) to yield spermidine. The sequence is that of Polyamine aminopropyltransferase from Shewanella oneidensis (strain ATCC 700550 / JCM 31522 / CIP 106686 / LMG 19005 / NCIMB 14063 / MR-1).